The sequence spans 252 residues: D-aminoacyl-tRNA deacylase (252 aa).

It belongs to the DtdA deacylase family. Monomer. Zn(2+) serves as cofactor.

The catalysed reaction is a D-aminoacyl-tRNA + H2O = a tRNA + a D-alpha-amino acid + H(+). It catalyses the reaction glycyl-tRNA(Ala) + H2O = tRNA(Ala) + glycine + H(+). D-aminoacyl-tRNA deacylase with broad substrate specificity. By recycling D-aminoacyl-tRNA to D-amino acids and free tRNA molecules, this enzyme counteracts the toxicity associated with the formation of D-aminoacyl-tRNA entities in vivo. The chain is D-aminoacyl-tRNA deacylase from Pyrobaculum islandicum (strain DSM 4184 / JCM 9189 / GEO3).